Here is a 204-residue protein sequence, read N- to C-terminus: Twist-related protein 1 (204 aa).

Residues 1–18 are compositionally biased toward low complexity; that stretch reads MMQDVSSSPVSPADDSLS. Residues 1 to 107 are disordered; sequence MMQDVSSSPV…GGGSPQSYEE (107 aa). Over residues 34–43 the composition is skewed to basic residues; the sequence is RGGRKRRSSR. Gly residues-rich tracts occupy residues 46–65 and 80–101; these read AGGGAGPGGAAGGGVGGGDE and GCGGGGSAGGGGGGGSSSGGGS. The bHLH domain occupies 110-161; the sequence is TQRVMANVRERQRTQSLNEAFAALRKIIPTLPSDKLSKIQTLKLAARYIDFL. The segment at 163 to 193 is sufficient for transactivation activity; it reads QVLQSDELDSKMASCSYVAHERFSYAFSVWR.

As to quaternary structure, efficient DNA binding requires dimerization with another bHLH protein. Homodimer or heterodimer with E proteins such as TCF3. ID1 binds preferentially to TCF3 but does not interact efficiently with TWIST1 so ID1 levels control the amount of TCF3 available to dimerize with TWIST and thus determine the type of dimer formed.

It is found in the nucleus. Functionally, acts as a transcriptional regulator. Inhibits myogenesis by sequestrating E proteins, inhibiting trans-activation by MEF2, and inhibiting DNA-binding by MYOD1 through physical interaction. This interaction probably involves the basic domains of both proteins. Also represses expression of pro-inflammatory cytokines such as TNFA and IL1B. Regulates cranial suture patterning and fusion. Activates transcription as a heterodimer with E proteins. Regulates gene expression differentially, depending on dimer composition. Homodimers induce expression of FGFR2 and POSTN while heterodimers repress FGFR2 and POSTN expression and induce THBS1 expression. Heterodimerization is also required for osteoblast differentiation. Represses the activity of the circadian transcriptional activator: NPAS2-BMAL1 heterodimer. In Nomascus concolor (Black crested gibbon), this protein is Twist-related protein 1 (TWIST1).